The primary structure comprises 377 residues: Odorant receptor 30a (377 aa).

The Cytoplasmic segment spans residues 1–34 (MELKSMDPVEMPIFGSTLKLMKFWSYLFVHNWRR). The chain crosses the membrane as a helical span at residues 35–55 (YVAMTPYIIINCTQYVDIYLS). Over 56–65 (TESLDFIIRN) the chain is Extracellular. Residues 66-86 (VYLAVLFTNTVVRGVLLCVQR) form a helical membrane-spanning segment. Residues 87-127 (FSYERFINILKSFYIELLQSDDPIINILVKETTRLSVLISR) lie on the Cytoplasmic side of the membrane. The chain crosses the membrane as a helical span at residues 128 to 148 (INLLMGCCTCIGFVTYPIFGS). The Extracellular segment spans residues 149–172 (ERVLPYGMYLPTIDEYKYASPYYE). The helical transmembrane segment at 173–193 (IFFVIQAIMAPMGCCMYIPYT) threads the bilayer. The Cytoplasmic segment spans residues 194–254 (NMVVTFTLFA…SMNALNTHLH (61 aa)). A helical transmembrane segment spans residues 255-275 (LVEFLCFGAMLCVLLFSLIIA). The Extracellular portion of the chain corresponds to 276-280 (QTIAQ). The helical transmembrane segment at 281–301 (TVIVIAYMVMIFANSVVLYYV) threads the bilayer. Over 302 to 344 (ANELYFQSFDIAIAAYESNWMDFDVDTQKTLKFLIMRSQKPLA) the chain is Cytoplasmic. The helical transmembrane segment at 345 to 365 (ILVGGTYPMNLKMLQSLLNAI) threads the bilayer. At 366-377 (YSFFTLLRRVYG) the chain is on the extracellular side.

Belongs to the insect chemoreceptor superfamily. Heteromeric odorant receptor channel (TC 1.A.69) family. Or30a subfamily. In terms of assembly, interacts with Orco. Complexes exist early in the endomembrane system in olfactory sensory neurons (OSNs), coupling these complexes to the conserved ciliary trafficking pathway.

It localises to the cell membrane. Functionally, odorant receptor which mediates acceptance or avoidance behavior, depending on its substrates. The odorant receptor repertoire encodes a large collection of odor stimuli that vary widely in identity, intensity, and duration. May form a complex with Orco to form odorant-sensing units, providing sensitive and prolonged odorant signaling and calcium permeability. Involved in the behavioral responses to propyl acetate and anisole. The polypeptide is Odorant receptor 30a (Or30a) (Drosophila melanogaster (Fruit fly)).